A 361-amino-acid chain; its full sequence is S-adenosylmethionine:tRNA ribosyltransferase-isomerase (361 aa).

The protein belongs to the QueA family. Monomer.

The protein resides in the cytoplasm. The catalysed reaction is 7-aminomethyl-7-carbaguanosine(34) in tRNA + S-adenosyl-L-methionine = epoxyqueuosine(34) in tRNA + adenine + L-methionine + 2 H(+). Its pathway is tRNA modification; tRNA-queuosine biosynthesis. In terms of biological role, transfers and isomerizes the ribose moiety from AdoMet to the 7-aminomethyl group of 7-deazaguanine (preQ1-tRNA) to give epoxyqueuosine (oQ-tRNA). In Actinobacillus pleuropneumoniae serotype 7 (strain AP76), this protein is S-adenosylmethionine:tRNA ribosyltransferase-isomerase.